A 125-amino-acid polypeptide reads, in one-letter code: UPF0332 protein AF_0298 (125 aa).

It belongs to the UPF0332 family.

The sequence is that of UPF0332 protein AF_0298 from Archaeoglobus fulgidus (strain ATCC 49558 / DSM 4304 / JCM 9628 / NBRC 100126 / VC-16).